The sequence spans 297 residues: Acetylglutamate kinase (297 aa).

Substrate-binding positions include 73 to 74 (GG), Arg95, and Asn188.

The protein belongs to the acetylglutamate kinase family. ArgB subfamily.

The protein localises to the cytoplasm. The catalysed reaction is N-acetyl-L-glutamate + ATP = N-acetyl-L-glutamyl 5-phosphate + ADP. The protein operates within amino-acid biosynthesis; L-arginine biosynthesis; N(2)-acetyl-L-ornithine from L-glutamate: step 2/4. Its function is as follows. Catalyzes the ATP-dependent phosphorylation of N-acetyl-L-glutamate. The polypeptide is Acetylglutamate kinase (Nostoc sp. (strain PCC 7120 / SAG 25.82 / UTEX 2576)).